A 65-amino-acid polypeptide reads, in one-letter code: Alpha-toxin Lqq4 (65 aa).

The region spanning 3–65 (RDAYIADDKN…VPIRIPGKCR (63 aa)) is the LCN-type CS-alpha/beta domain. The interval 9 to 13 (DDKNC) is specificity module, loop 1. 4 cysteine pairs are disulfide-bonded: cysteine 13/cysteine 64, cysteine 17/cysteine 37, cysteine 23/cysteine 47, and cysteine 27/cysteine 49. 2 specificity module, loop regions span residues 40-44 (LGKYG) and 57-65 (PIRIPGKCR). An Arginine amide modification is found at arginine 65.

It belongs to the long (4 C-C) scorpion toxin superfamily. Sodium channel inhibitor family. Alpha subfamily. In terms of processing, the recombinant toxin which is used for activity tests is not amidated. However, C-terminal amidation does not appear to play an important role in activity, since the non-amidated recombinant toxin and the native toxin (which is amidated) show similar activities on all sodium channels tested. In terms of tissue distribution, expressed by the venom gland.

The protein localises to the secreted. Its function is as follows. Alpha toxins bind voltage-independently at site-3 of sodium channels (Nav) and inhibit the inactivation of the activated channels, thereby blocking neuronal transmission. Both native and recombinant (non-amidated) toxins inhibit inactivation of Nav1.2/SCN2A (EC(50)=31.2-36.6 nM), Nav1.6/SCN8A (EC(50)=6.9-8.9 nM), and Nav1.7/SCN9A (EC(50)=182.0-260.1 nM). This is Alpha-toxin Lqq4 from Leiurus quinquestriatus quinquestriatus (Egyptian scorpion).